We begin with the raw amino-acid sequence, 366 residues long: S-adenosylmethionine:tRNA ribosyltransferase-isomerase (366 aa).

The protein belongs to the QueA family. Monomer.

It localises to the cytoplasm. The catalysed reaction is 7-aminomethyl-7-carbaguanosine(34) in tRNA + S-adenosyl-L-methionine = epoxyqueuosine(34) in tRNA + adenine + L-methionine + 2 H(+). It functions in the pathway tRNA modification; tRNA-queuosine biosynthesis. Transfers and isomerizes the ribose moiety from AdoMet to the 7-aminomethyl group of 7-deazaguanine (preQ1-tRNA) to give epoxyqueuosine (oQ-tRNA). The protein is S-adenosylmethionine:tRNA ribosyltransferase-isomerase of Agrobacterium fabrum (strain C58 / ATCC 33970) (Agrobacterium tumefaciens (strain C58)).